The primary structure comprises 111 residues: Nucleoid-associated protein Clim_0875 (111 aa).

It belongs to the YbaB/EbfC family. In terms of assembly, homodimer.

It is found in the cytoplasm. It localises to the nucleoid. Binds to DNA and alters its conformation. May be involved in regulation of gene expression, nucleoid organization and DNA protection. This is Nucleoid-associated protein Clim_0875 from Chlorobium limicola (strain DSM 245 / NBRC 103803 / 6330).